The sequence spans 371 residues: MVDDSLKDAIAGGAAGLASSLVVAPLDVVKTRKQAQKAFYSTGGGKNTMVLGGTLSSMRTIFHNEGIAGLYRGVGPMMLGYLPSWSIYFVVYEKCKVLFGVNKKYTSLHEIDSSKVGIKASLDSSDKQFYRYWGGQIFSAVIAGAASVTLTNPIWVVKTRLVTQSHPRASSFVDKIAAATTVQFRNLQTDAPSVKWRMPRFWLKRRTNVKSSPSQHPVNPPTGPACSPAYNNTFDAFRKIYKYEGLAAFYRGLFPSLFGTLHVGIQFPLYEYFKSFLDDFFGKKSNFHIVLAATLSKIAASTVTYPHEVLRTRLQSLDAPTHNSATLLIRDIWRSEGWRKYYSGMATNFIRTIPASSVTFLSFEIVRKWLN.

3 Solcar repeats span residues 3–98 (DDSL…CKVL), 131–276 (RYWG…FKSF), and 284–369 (KSNF…VRKW). The next 6 helical transmembrane spans lie at 9–29 (AIAG…LDVV), 73–93 (GVGP…VVYE), 137–157 (IFSA…IWVV), 253–273 (LFPS…YEYF), 290–310 (VLAA…HEVL), and 341–362 (YYSG…TFLS).

The protein belongs to the mitochondrial carrier (TC 2.A.29) family.

Its subcellular location is the mitochondrion inner membrane. This is an uncharacterized protein from Schizosaccharomyces pombe (strain 972 / ATCC 24843) (Fission yeast).